An 86-amino-acid chain; its full sequence is Large ribosomal subunit protein bL27 (86 aa).

Positions 1–24 are disordered; that stretch reads MAHKKGTGSTRNGRDSNSKRLGVK.

The protein belongs to the bacterial ribosomal protein bL27 family.

In Prochlorococcus marinus (strain MIT 9312), this protein is Large ribosomal subunit protein bL27.